A 168-amino-acid chain; its full sequence is Cytochrome c oxidase subunit 2 (168 aa).

Over Met-1–Asp-3 the chain is Cytoplasmic. Residues Glu-4–Ala-38 form a helical membrane-spanning segment. Over Thr-39–Glu-168 the chain is Periplasmic. Residues His-114, Cys-149, Cys-153, and His-157 each coordinate Cu cation.

It belongs to the cytochrome c oxidase subunit 2 family.

The protein resides in the cell membrane. It carries out the reaction 4 Fe(II)-[cytochrome c] + O2 + 8 H(+)(in) = 4 Fe(III)-[cytochrome c] + 2 H2O + 4 H(+)(out). In terms of biological role, subunits I and II form the functional core of the enzyme complex. Electrons originating in cytochrome c are transferred via heme a and Cu(A) to the binuclear center formed by heme a3 and Cu(B). In Thermus thermophilus (strain ATCC 27634 / DSM 579 / HB8), this protein is Cytochrome c oxidase subunit 2 (cbaB).